Reading from the N-terminus, the 142-residue chain is Transcriptional regulator MraZ (142 aa).

SpoVT-AbrB domains lie at 5 to 51 (ASAL…PRPE) and 77 to 120 (AMDV…DSQT).

This sequence belongs to the MraZ family. Forms oligomers.

It is found in the cytoplasm. It localises to the nucleoid. In Burkholderia cenocepacia (strain ATCC BAA-245 / DSM 16553 / LMG 16656 / NCTC 13227 / J2315 / CF5610) (Burkholderia cepacia (strain J2315)), this protein is Transcriptional regulator MraZ.